We begin with the raw amino-acid sequence, 594 residues long: Actin-histidine N-methyltransferase (594 aa).

The interval 1–22 is disordered; that stretch reads MGKKSRVKTQKSGTGATATVSP. Polar residues predominate over residues 10-20; sequence QKSGTGATATV. Residues arginine 75, 104–106, arginine 254, 275–279, and 325–327 contribute to the S-adenosyl-L-methionine site; these read EGF, DMCNH, and SGF. Residues 94–314 enclose the SET domain; sequence EGFEMVNFKE…AGEQIYIFYG (221 aa). Position 513 is a phosphoserine (serine 513). A disordered region spans residues 549 to 594; the sequence is ENGLVNGENSIPNGTRSENESLNQESKRAVEDAKGSSSDSTAGVKE. The span at 555–572 shows a compositional bias: polar residues; sequence GENSIPNGTRSENESLNQ. Over residues 573-582 the composition is skewed to basic and acidic residues; it reads ESKRAVEDAK. A compositionally biased stretch (polar residues) spans 583 to 594; that stretch reads GSSSDSTAGVKE.

Belongs to the class V-like SAM-binding methyltransferase superfamily. SETD3 actin-histidine methyltransferase family. In terms of assembly, interacts with MYOD1. Phosphorylated by GSK3B, which is required for recognition by the SCF(FBXW7) complex and subsequent degradation. Post-translationally, ubiquitinated by the SCF(FBXW7) complex following phosphorylation by GSK3B, leading to its degradation by the proteasome.

Its subcellular location is the cytoplasm. The protein resides in the nucleus. The catalysed reaction is L-histidyl-[protein] + S-adenosyl-L-methionine = N(tele)-methyl-L-histidyl-[protein] + S-adenosyl-L-homocysteine + H(+). In terms of biological role, protein-histidine N-methyltransferase that specifically mediates 3-methylhistidine (tele-methylhistidine) methylation of actin at 'His-73'. Histidine methylation of actin is required for smooth muscle contraction of the laboring uterus during delivery. Does not have protein-lysine N-methyltransferase activity and probably only catalyzes histidine methylation of actin. This is Actin-histidine N-methyltransferase from Homo sapiens (Human).